We begin with the raw amino-acid sequence, 206 residues long: Isochorismatase family protein 1A (206 aa).

It belongs to the isochorismatase family.

The chain is Isochorismatase family protein 1A from Dictyostelium discoideum (Social amoeba).